Here is an 811-residue protein sequence, read N- to C-terminus: Phenylalanine--tRNA ligase beta subunit (811 aa).

Residues 40–156 (AEKNENIVVG…EDIEVGSKVD (117 aa)) enclose the tRNA-binding domain. The B5 domain occupies 411–486 (KSTKEVKVPL…RIHGYDHLPY (76 aa)). Aspartate 464, aspartate 470, glutamate 473, and glutamate 474 together coordinate Mg(2+). Residues 717 to 810 (PRYPSVSRDI…VNKKFGSYVR (94 aa)) enclose the FDX-ACB domain.

It belongs to the phenylalanyl-tRNA synthetase beta subunit family. Type 1 subfamily. In terms of assembly, tetramer of two alpha and two beta subunits. The cofactor is Mg(2+).

The protein resides in the cytoplasm. It catalyses the reaction tRNA(Phe) + L-phenylalanine + ATP = L-phenylalanyl-tRNA(Phe) + AMP + diphosphate + H(+). The sequence is that of Phenylalanine--tRNA ligase beta subunit from Oceanobacillus iheyensis (strain DSM 14371 / CIP 107618 / JCM 11309 / KCTC 3954 / HTE831).